The following is an 806-amino-acid chain: GPI ethanolamine phosphate transferase 2 (806 aa).

Residues asparagine 70, asparagine 184, and asparagine 242 are each glycosylated (N-linked (GlcNAc...) asparagine). Transmembrane regions (helical) follow at residues 396-416, 425-445, and 451-471; these read MLFL…YCYI, SVLM…SSFV, and IWWW…PSCT. N-linked (GlcNAc...) asparagine glycosylation occurs at asparagine 488. 8 consecutive transmembrane segments (helical) span residues 508 to 528, 532 to 552, 593 to 613, 624 to 644, 664 to 684, 706 to 726, 745 to 765, and 782 to 804; these read PSIK…DGFT, LLSI…TCWA, LFFK…VVFA, LFTI…FLVF, CEMF…QFGG, IYVV…YWSL, LSSM…CICM, and LLGW…LLMV.

Belongs to the PIGG/PIGN/PIGO family. PIGG subfamily.

It localises to the endoplasmic reticulum membrane. The protein operates within glycolipid biosynthesis; glycosylphosphatidylinositol-anchor biosynthesis. In terms of biological role, ethanolamine phosphate transferase involved in glycosylphosphatidylinositol-anchor biosynthesis. Transfers ethanolamine phosphate to the GPI second mannose. This chain is GPI ethanolamine phosphate transferase 2 (LAS21), found in Eremothecium gossypii (strain ATCC 10895 / CBS 109.51 / FGSC 9923 / NRRL Y-1056) (Yeast).